We begin with the raw amino-acid sequence, 122 residues long: Large ribosomal subunit protein eL31 (122 aa).

Belongs to the eukaryotic ribosomal protein eL31 family.

This is Large ribosomal subunit protein eL31 from Caenorhabditis elegans.